The sequence spans 152 residues: SsrA-binding protein (152 aa).

The protein belongs to the SmpB family.

The protein localises to the cytoplasm. Required for rescue of stalled ribosomes mediated by trans-translation. Binds to transfer-messenger RNA (tmRNA), required for stable association of tmRNA with ribosomes. tmRNA and SmpB together mimic tRNA shape, replacing the anticodon stem-loop with SmpB. tmRNA is encoded by the ssrA gene; the 2 termini fold to resemble tRNA(Ala) and it encodes a 'tag peptide', a short internal open reading frame. During trans-translation Ala-aminoacylated tmRNA acts like a tRNA, entering the A-site of stalled ribosomes, displacing the stalled mRNA. The ribosome then switches to translate the ORF on the tmRNA; the nascent peptide is terminated with the 'tag peptide' encoded by the tmRNA and targeted for degradation. The ribosome is freed to recommence translation, which seems to be the essential function of trans-translation. This chain is SsrA-binding protein, found in Rickettsia prowazekii (strain Madrid E).